The chain runs to 246 residues: NAD(P)H-quinone oxidoreductase subunit K, organellar chromatophore (246 aa).

Residues Cys-58, Cys-59, Cys-123, and Cys-154 each coordinate [4Fe-4S] cluster.

The protein belongs to the complex I 20 kDa subunit family. As to quaternary structure, NDH-1 is composed of 14 different subunits. Subunits nuoB, C, D, E, F, and G constitute the peripheral sector of the complex. The cofactor is [4Fe-4S] cluster.

The protein localises to the plastid. It is found in the organellar chromatophore thylakoid membrane. It catalyses the reaction a quinone + NADH + H(+) = a quinol + NAD(+). Its function is as follows. NDH-1 shuttles electrons from NADH, via FMN and iron-sulfur (Fe-S) centers, to quinones in the respiratory chain. Couples the redox reaction to proton translocation (for every two electrons transferred, four hydrogen ions are translocated across the cytoplasmic membrane), and thus conserves the redox energy in a proton gradient. The polypeptide is NAD(P)H-quinone oxidoreductase subunit K, organellar chromatophore (Paulinella chromatophora).